The sequence spans 152 residues: Small ribosomal subunit protein uS15 (152 aa).

This sequence belongs to the universal ribosomal protein uS15 family. As to quaternary structure, part of the 30S ribosomal subunit.

The polypeptide is Small ribosomal subunit protein uS15 (Methanocorpusculum labreanum (strain ATCC 43576 / DSM 4855 / Z)).